The primary structure comprises 95 residues: Progonadoliberin-1 (95 aa).

Positions 1–22 are cleaved as a signal peptide; the sequence is MAPQTFALWLLLVGTLLGQGCC. Q23 bears the Pyrrolidone carboxylic acid mark. G32 carries the post-translational modification Glycine amide.

Belongs to the GnRH family.

Its subcellular location is the secreted. Functionally, stimulates the secretion of gonadotropins. This chain is Progonadoliberin-1 (gnrh1), found in Morone saxatilis (Striped bass).